The following is a 728-amino-acid chain: Fibulin-1 (728 aa).

A signal peptide spans methionine 1 to alanine 17. 30 disulfide bridges follow: cysteine 23–cysteine 49, cysteine 24–cysteine 56, cysteine 37–cysteine 57, cysteine 66–cysteine 94, cysteine 79–cysteine 95, cysteine 97–cysteine 121, cysteine 98–cysteine 128, cysteine 111–cysteine 129, cysteine 159–cysteine 168, cysteine 164–cysteine 178, cysteine 180–cysteine 279, cysteine 285–cysteine 298, cysteine 292–cysteine 307, cysteine 347–cysteine 359, cysteine 353–cysteine 368, cysteine 375–cysteine 388, cysteine 394–cysteine 404, cysteine 399–cysteine 413, cysteine 415–cysteine 428, cysteine 434–cysteine 448, cysteine 442–cysteine 457, cysteine 459–cysteine 472, cysteine 478–cysteine 489, cysteine 485–cysteine 498, cysteine 500–cysteine 513, cysteine 519–cysteine 534, cysteine 530–cysteine 543, cysteine 545–cysteine 558, cysteine 564–cysteine 576, and cysteine 569–cysteine 585. Anaphylatoxin-like domains follow at residues cysteine 23 to asparagine 64, alanine 65 to aspartate 96, and cysteine 97 to cysteine 129. Residues leucine 155–valine 194 enclose the EGF-like 1 domain. The region spanning aspartate 195–valine 280 is the EGF-like 2; calcium-binding domain. In terms of domain architecture, EGF-like 3; calcium-binding spans aspartate 281–isoleucine 344. Residues aspartate 343–glutamate 389 enclose the EGF-like 4; calcium-binding domain. One can recognise an EGF-like 5; calcium-binding domain in the interval aspartate 390–glutamate 429. The EGF-like 6; calcium-binding domain occupies aspartate 430 to glutamate 473. Residues aspartate 474 to glutamate 514 form the EGF-like 7; calcium-binding domain. An EGF-like 8; calcium-binding domain is found at aspartate 515 to valine 559. An EGF-like 9; calcium-binding domain is found at aspartate 560 to cysteine 610. N-linked (GlcNAc...) asparagine glycosylation occurs at asparagine 624.

Belongs to the fibulin family. As to quaternary structure, homomultimerizes and interacts with various extracellular matrix components. In terms of tissue distribution, expressed in head muscle cells, anterior and posterior intestinal cells. Isoform a: Expressed in male and hermaphrodite gonad, anterior and posterior intestine and pharyngeal basement membranes, body-wall muscle, GLR cells, uterine attachment and mechanosensory neurons. Isoform c: Expressed on ALM/PLM mechanosensory neuron attachments, in flexible tracks connecting the pharyngeal, body-wall-muscle basement membranes and in uterine attachments.

Its subcellular location is the secreted. It is found in the extracellular space. The protein resides in the extracellular matrix. It localises to the basement membrane. Its function is as follows. Incorporated into fibronectin-containing matrix fibers. Plays a role in cell adhesion and migration along protein fibers within the extracellular matrix (ECM). Important for certain developmental processes and contributes to the supramolecular organization of ECM architecture, in particular to those of basement membranes. In terms of biological role, involved in regulating the shape and adhesion of cells in the developing pharynx, intestine, body-wall muscle and gonadal tissue. During gonadogenesis, regulates the width of gonads and the migration of distal tip cells (DTC). Together with type IV collagen let-2 and downstream of metalloprotease mig-17, recruits nidogen nid-1 to the gonad basement membrane thereby inducing basement membrane remodeling required for the directional migration of DTCs. Acts antagonistically with metalloprotease gon-1 to maintain optimal levels of type IV collagen emb-9 in the gonad basement membrane during gonadogenesis. Required for larval development. Involved in the assembly of the flexible hemicentin-containing tracks found joining the pharynx and body-wall-muscle basement membranes. The protein is Fibulin-1 (fbl-1) of Caenorhabditis elegans.